Consider the following 271-residue polypeptide: Phosphoribosylformylglycinamidine synthase subunit PurQ (271 aa).

The region spanning 7–253 is the Glutamine amidotransferase type-1 domain; sequence KVAVLRMEGT…FGYQVGRREG (247 aa). Catalysis depends on C104, which acts as the Nucleophile. Active-site residues include H238 and E240.

In terms of assembly, part of the FGAM synthase complex composed of 1 PurL, 1 PurQ and 2 PurS subunits.

The protein resides in the cytoplasm. The catalysed reaction is N(2)-formyl-N(1)-(5-phospho-beta-D-ribosyl)glycinamide + L-glutamine + ATP + H2O = 2-formamido-N(1)-(5-O-phospho-beta-D-ribosyl)acetamidine + L-glutamate + ADP + phosphate + H(+). It catalyses the reaction L-glutamine + H2O = L-glutamate + NH4(+). It participates in purine metabolism; IMP biosynthesis via de novo pathway; 5-amino-1-(5-phospho-D-ribosyl)imidazole from N(2)-formyl-N(1)-(5-phospho-D-ribosyl)glycinamide: step 1/2. Its function is as follows. Part of the phosphoribosylformylglycinamidine synthase complex involved in the purines biosynthetic pathway. Catalyzes the ATP-dependent conversion of formylglycinamide ribonucleotide (FGAR) and glutamine to yield formylglycinamidine ribonucleotide (FGAM) and glutamate. The FGAM synthase complex is composed of three subunits. PurQ produces an ammonia molecule by converting glutamine to glutamate. PurL transfers the ammonia molecule to FGAR to form FGAM in an ATP-dependent manner. PurS interacts with PurQ and PurL and is thought to assist in the transfer of the ammonia molecule from PurQ to PurL. In Archaeoglobus fulgidus (strain ATCC 49558 / DSM 4304 / JCM 9628 / NBRC 100126 / VC-16), this protein is Phosphoribosylformylglycinamidine synthase subunit PurQ.